The sequence spans 446 residues: Minor fimbrium tip subunit Mfa3 (446 aa).

The signal sequence occupies residues 1–20 (MMQLKKRYFALILLLFLWSG). Cys21 carries the N-palmitoyl cysteine lipid modification. Cys21 carries the S-diacylglycerol cysteine lipid modification. The propeptide occupies 21-43 (CDRGVDPQPDPLQPDVYLLVNAR).

This sequence belongs to the bacteroidetes fimbrillin superfamily. FimB/Mfa2 family. Component of the fimbrium tip. Minor fimbriae are composed of a structural subunit, most often Mfa1, and the accessory subunits Mfa3, Mfa4 and Mfa5. Fimbrium assembly occurs by linear, head-to-tail oligomerization of fimbrial subunits. This is mediated via insertion of a C-terminal beta-strand from one subunit into a groove in the N-terminal domain of the following subunit. Mfa3 is required for Mfa4 and Mfa5 insertion into the fimbrium.

It localises to the fimbrium. The protein localises to the cell outer membrane. Its function is as follows. Tip subunit of the minor fimbriae. These filamentous pili are attached to the cell surface; they mediate biofilm formation, adhesion onto host cells and onto other bacteria that are part of the oral microbiome. They play an important role in invasion of periodontal tissues and are recognized as major virulence factors. Fimbrium subunits from different strains have highly divergent sequences, and this correlates with pathogenicity. The protein is Minor fimbrium tip subunit Mfa3 (mfa3) of Porphyromonas gingivalis (strain ATCC 33277 / DSM 20709 / CIP 103683 / JCM 12257 / NCTC 11834 / 2561).